Consider the following 762-residue polypeptide: MGNGSVKPKHAKHPDGHSGNLSNEALRSKVLELERELRRKDAELQEREYHLKELREQLAKQTVAIAELTEELQSKCIQLNKLQDVIHVQGGSPLQASPDKVPLDVHRKTSGLVSLHSRRGAKAGVSAEPTTRTYDLNKPPEFSFEKARVRKDSSEKKLITDALNKNQFLKRLDPQQIKDMVECMYGEKLSTGSYVIKQGEPGNHIFVLAEGRLEVFQGEKLLSSIPMWTTFGELAILYNCTRTASVKAITNVKTWALDREVFQNIMRRTAQARDEEYRNFLRSVSLLKNLPEDKLTKIIDCLEVEYYDKGDYIIREGEEGSTFFILAKGKVKVTQSTEGHDQPQLIKTLQKGEYFGEKALISDDVRSANIIAEENDVACLVIDRETFNQTVGTFDELQKYLEGYVATLNRDDEKRHAKRSMSSWKLSKALSLEMIQLKEKVARFSSTSPFQNLEIIATLGVGGFGRVELVKVKNENVAFAMKCIRKKHIVDTKQQEHVYSEKRILEELCSPFIVKLYRTFKDNKYVYMLLEACLGGELWSILRDRGSFDEPTSKFCVACVTEAFDYLHLLGIIYRDLKPENLILDADGYLKLVDFGFAKKIGSGQKTWTFCGTPEYVAPEVILNKGHDFSVDFWSLGILVYELLTGNPPFSGIDQMMTYNLILKGIEKMDFPRKITRRPEDLIRRLCRQNPTERLGNLKNGINDIKKHRWLNGFNWEGLKARSLPSPLRRELSGPIDHSYFDKYPPEKGVPPDEMSGWDKDF.

Residues 1 to 26 (MGNGSVKPKHAKHPDGHSGNLSNEAL) are disordered. Gly2 is lipidated: N-myristoyl glycine. Phosphoserine is present on residues Ser110 and Ser117. Residues 118-138 (RRGAKAGVSAEPTTRTYDLNK) form a disordered region. The segment at 168–283 (FLKRLDPQQI…DEEYRNFLRS (116 aa)) is cGMP-binding, high affinity; cAMP-binding, moderate affinity. Residues 232–235 (GELA), 242–243 (RT), Lys347, 356–359 (GEKA), 366–367 (RS), Asp412, and Arg415 each bind 3',5'-cyclic GMP. A cGMP-binding, high affinity; cAMP-binding, low affinity region spans residues 286 to 416 (LLKNLPEDKL…TLNRDDEKRH (131 aa)). Position 431 is a phosphoserine (Ser431). The Protein kinase domain maps to 453-711 (LEIIATLGVG…INDIKKHRWL (259 aa)). ATP contacts are provided by residues 459–467 (LGVGGFGRV) and Lys482. Residue Asp576 is the Proton acceptor of the active site. Phosphothreonine is present on Thr609. The 51-residue stretch at 712 to 762 (NGFNWEGLKARSLPSPLRRELSGPIDHSYFDKYPPEKGVPPDEMSGWDKDF) folds into the AGC-kinase C-terminal domain. Positions 740-762 (YFDKYPPEKGVPPDEMSGWDKDF) are disordered.

This sequence belongs to the protein kinase superfamily. AGC Ser/Thr protein kinase family. cGMP subfamily. As to quaternary structure, interacts with GRIA1/GLUR1. Post-translationally, myristoylation mediates membrane localization.

The protein localises to the apical cell membrane. It is found in the cell membrane. The catalysed reaction is L-seryl-[protein] + ATP = O-phospho-L-seryl-[protein] + ADP + H(+). It carries out the reaction L-threonyl-[protein] + ATP = O-phospho-L-threonyl-[protein] + ADP + H(+). Its activity is regulated as follows. Binding of cGMP results in enzyme activation. Crucial regulator of intestinal secretion and bone growth. Phosphorylates and activates CFTR on the plasma membrane. Plays a key role in intestinal secretion by regulating cGMP-dependent translocation of CFTR in jejunum. Acts downstream of NMDAR to activate the plasma membrane accumulation of GRIA1/GLUR1 in synapse and increase synaptic plasticity. Phosphorylates GRIA1/GLUR1 at Ser-863. Acts as a regulator of gene expression and activator of the extracellular signal-regulated kinases MAPK3/ERK1 and MAPK1/ERK2 in mechanically stimulated osteoblasts. Under fluid shear stress, mediates ERK activation and subsequent induction of FOS, FOSL1/FRA1, FOSL2/FRA2 and FOSB that play a key role in the osteoblast anabolic response to mechanical stimulation. In Mus musculus (Mouse), this protein is cGMP-dependent protein kinase 2 (Prkg2).